We begin with the raw amino-acid sequence, 398 residues long: tRNA(Ile)-lysidine synthase (398 aa).

Ser17–Ser22 contributes to the ATP binding site.

This sequence belongs to the tRNA(Ile)-lysidine synthase family.

It localises to the cytoplasm. The catalysed reaction is cytidine(34) in tRNA(Ile2) + L-lysine + ATP = lysidine(34) in tRNA(Ile2) + AMP + diphosphate + H(+). In terms of biological role, ligates lysine onto the cytidine present at position 34 of the AUA codon-specific tRNA(Ile) that contains the anticodon CAU, in an ATP-dependent manner. Cytidine is converted to lysidine, thus changing the amino acid specificity of the tRNA from methionine to isoleucine. The protein is tRNA(Ile)-lysidine synthase of Mesoplasma florum (strain ATCC 33453 / NBRC 100688 / NCTC 11704 / L1) (Acholeplasma florum).